Here is a 513-residue protein sequence, read N- to C-terminus: ATP synthase subunit alpha 2 (513 aa).

169-176 contributes to the ATP binding site; the sequence is GDRQCGKT.

This sequence belongs to the ATPase alpha/beta chains family. F-type ATPases have 2 components, CF(1) - the catalytic core - and CF(0) - the membrane proton channel. CF(1) has five subunits: alpha(3), beta(3), gamma(1), delta(1), epsilon(1). CF(0) has three main subunits: a(1), b(2) and c(9-12). The alpha and beta chains form an alternating ring which encloses part of the gamma chain. CF(1) is attached to CF(0) by a central stalk formed by the gamma and epsilon chains, while a peripheral stalk is formed by the delta and b chains.

It is found in the cell inner membrane. It carries out the reaction ATP + H2O + 4 H(+)(in) = ADP + phosphate + 5 H(+)(out). Produces ATP from ADP in the presence of a proton gradient across the membrane. The alpha chain is a regulatory subunit. The polypeptide is ATP synthase subunit alpha 2 (Paraburkholderia xenovorans (strain LB400)).